The chain runs to 198 residues: Glycerol-3-phosphate acyltransferase (198 aa).

The next 5 helical transmembrane spans lie at 6–26 (FLPVALIIGYLFGSIPFGLIL), 55–75 (GLAAGTLLGDALKGTAAVIIS), 83–103 (AAMIAGLGAFLGHLFPVWLKF), 113–133 (IGILIGLFWPGAIFFCLVWLA), and 154–174 (IVLWAFGHTALAALFALLTLL).

Belongs to the PlsY family. In terms of assembly, probably interacts with PlsX.

It localises to the cell inner membrane. The catalysed reaction is an acyl phosphate + sn-glycerol 3-phosphate = a 1-acyl-sn-glycero-3-phosphate + phosphate. It functions in the pathway lipid metabolism; phospholipid metabolism. In terms of biological role, catalyzes the transfer of an acyl group from acyl-phosphate (acyl-PO(4)) to glycerol-3-phosphate (G3P) to form lysophosphatidic acid (LPA). This enzyme utilizes acyl-phosphate as fatty acyl donor, but not acyl-CoA or acyl-ACP. This Bradyrhizobium sp. (strain BTAi1 / ATCC BAA-1182) protein is Glycerol-3-phosphate acyltransferase.